We begin with the raw amino-acid sequence, 315 residues long: MACFRVILYLSVIFFVQCVFAAPKGITKVAPENHNFFGRITSYAHPKDVPDPVPMYQQFAALAQQSNCHNYHINISVGDATLLYSWGDNDRNQRLQLFHSKSLGIVASWAGMNPTKINSILGAADVFLVDVDRRYFPHAEKGAKLYKGFQDAYKRVAPTFIKELQYYQELYNEDRVSLTGLSYGAALANIALLHVKKNLKRGSIYRTVAFGLPRVGNQEWANSIDKHADGKFFYVANGNDLVVRAPPRELGYQHPSGQIWINPSNSSNWKFYPGQENVHGANSEFGYSIPDHTGVYFRTEIASLWGHCPATVGKD.

Residues 1 to 21 form the signal peptide; sequence MACFRVILYLSVIFFVQCVFA. A disulfide bridge connects residues Cys-68 and Cys-308. N-linked (GlcNAc...) asparagine glycosylation is present at Asn-74. The active-site Nucleophile is Ser-182. Residue Asp-240 is part of the active site. Residue Asn-265 is glycosylated (N-linked (GlcNAc...) asparagine). His-292 is an active-site residue.

The protein belongs to the AB hydrolase superfamily. Lipase family. Class 3 subfamily.

It is found in the secreted. The catalysed reaction is a monoacylglycerol + H2O = glycerol + a fatty acid + H(+). It catalyses the reaction a diacylglycerol + H2O = a monoacylglycerol + a fatty acid + H(+). Its function is as follows. Secreted lipase involved in Dandruff and seborrheic dermatitis (D/SD) probably via lipase-mediated breakdown of sebaceous lipids and release of irritating free fatty acids. Shows activity against monoglyceride and diglyceride substrates and generates free oleic acid from the substrates mono- and diolein. Able to cleave the oleic acid from both the 1 and the 2 position of the glycerol backbone as 1,2 isomers of diolein were converted into oleic acid and glycerol. Due to an absence of fatty acid synthase genes in Malassezia species, secretory lipases are essential for the yeast to generate free fatty acids from degradation of sebum and assimilate them as lipid sources for growth. Plays an essential role at the pathogen-host interface during disease progression. Also performs the reverse reaction to build diacylglycerols from monoacylglycerols. This is Secreted mono- and diacylglycerol lipase LIP2 from Malassezia restricta (strain ATCC 96810 / NBRC 103918 / CBS 7877) (Seborrheic dermatitis infection agent).